We begin with the raw amino-acid sequence, 398 residues long: Phosphopentomutase (398 aa).

Mn(2+)-binding residues include D13, D290, H295, D331, H332, and H343.

Belongs to the phosphopentomutase family. It depends on Mn(2+) as a cofactor.

The protein resides in the cytoplasm. It carries out the reaction 2-deoxy-alpha-D-ribose 1-phosphate = 2-deoxy-D-ribose 5-phosphate. The enzyme catalyses alpha-D-ribose 1-phosphate = D-ribose 5-phosphate. The protein operates within carbohydrate degradation; 2-deoxy-D-ribose 1-phosphate degradation; D-glyceraldehyde 3-phosphate and acetaldehyde from 2-deoxy-alpha-D-ribose 1-phosphate: step 1/2. In terms of biological role, isomerase that catalyzes the conversion of deoxy-ribose 1-phosphate (dRib-1-P) and ribose 1-phosphate (Rib-1-P) to deoxy-ribose 5-phosphate (dRib-5-P) and ribose 5-phosphate (Rib-5-P), respectively. The protein is Phosphopentomutase of Clostridium tetani (strain Massachusetts / E88).